The sequence spans 289 residues: Acetyl-coenzyme A carboxylase carboxyl transferase subunit beta (289 aa).

The CoA carboxyltransferase N-terminal domain occupies 28-289 (VMTKCPKCKK…QGGEMAVWQS (262 aa)). Zn(2+) is bound by residues Cys32, Cys35, Cys51, and Cys54. A C4-type zinc finger spans residues 32 to 54 (CPKCKKIMYTKEVLKNLKVCVNC).

This sequence belongs to the AccD/PCCB family. In terms of assembly, acetyl-CoA carboxylase is a heterohexamer composed of biotin carboxyl carrier protein (AccB), biotin carboxylase (AccC) and two subunits each of ACCase subunit alpha (AccA) and ACCase subunit beta (AccD). Zn(2+) is required as a cofactor.

Its subcellular location is the cytoplasm. It carries out the reaction N(6)-carboxybiotinyl-L-lysyl-[protein] + acetyl-CoA = N(6)-biotinyl-L-lysyl-[protein] + malonyl-CoA. The protein operates within lipid metabolism; malonyl-CoA biosynthesis; malonyl-CoA from acetyl-CoA: step 1/1. In terms of biological role, component of the acetyl coenzyme A carboxylase (ACC) complex. Biotin carboxylase (BC) catalyzes the carboxylation of biotin on its carrier protein (BCCP) and then the CO(2) group is transferred by the transcarboxylase to acetyl-CoA to form malonyl-CoA. In Bacillus thuringiensis subsp. konkukian (strain 97-27), this protein is Acetyl-coenzyme A carboxylase carboxyl transferase subunit beta.